The following is a 134-amino-acid chain: Retinoid-binding protein 7 (134 aa).

The protein belongs to the calycin superfamily. Fatty-acid binding protein (FABP) family. Highly expressed in white adipose tissue and mammary gland.

It is found in the cytoplasm. Functionally, intracellular transport of retinol. The chain is Retinoid-binding protein 7 (Rbp7) from Mus musculus (Mouse).